Reading from the N-terminus, the 204-residue chain is MQPISVITGRIVALPVQDIDTDQIIPARYLKVTDKSGLAEGLFYAWRFDADGKPNPDFVLNRPETQGATILVAGRNFGCGSSREHAPWALLGYGFKAVISPYFADIFRNNALKNGLLTVQVDDETYQQLVSLFDEDPTTTVTIDLAAQTVTLPDGRGVHFPIDPFTKHCLLHGVDQMGFLLNEEAAISAYEASRPARVVTTARS.

This sequence belongs to the LeuD family. LeuD type 1 subfamily. As to quaternary structure, heterodimer of LeuC and LeuD.

It catalyses the reaction (2R,3S)-3-isopropylmalate = (2S)-2-isopropylmalate. It participates in amino-acid biosynthesis; L-leucine biosynthesis; L-leucine from 3-methyl-2-oxobutanoate: step 2/4. In terms of biological role, catalyzes the isomerization between 2-isopropylmalate and 3-isopropylmalate, via the formation of 2-isopropylmaleate. The sequence is that of 3-isopropylmalate dehydratase small subunit from Roseiflexus sp. (strain RS-1).